The chain runs to 206 residues: Ras-related protein Rab7 (206 aa).

GTP-binding positions include 15–22, 63–67, and 125–128; these read GDSGVGKT, DTAGQ, and NKVD. Residues cysteine 205 and cysteine 206 are each lipidated (S-geranylgeranyl cysteine).

The protein belongs to the small GTPase superfamily. Rab family.

It is found in the cell membrane. Functionally, protein transport. Probably involved in vesicular traffic. The chain is Ras-related protein Rab7 from Cenchrus ciliaris (Buffelgrass).